Consider the following 276-residue polypeptide: Nickel import system permease protein NikC (276 aa).

Transmembrane regions (helical) follow at residues leucine 10 to serine 30, leucine 73 to phenylalanine 93, phenylalanine 108 to phenylalanine 128, isoleucine 186 to serine 206, and isoleucine 238 to glycine 258. In terms of domain architecture, ABC transmembrane type-1 spans alanine 69–glycine 258.

It belongs to the binding-protein-dependent transport system permease family. OppBC subfamily. As to quaternary structure, the complex is composed of two ATP-binding proteins (NikD and NikE), two transmembrane proteins (NikB and NikC) and a solute-binding protein (NikA).

The protein resides in the cell membrane. Its function is as follows. Part of the ABC transporter complex NikABCDE (Opp2) involved in nickel import. Probably responsible for the translocation of the substrate across the membrane. The chain is Nickel import system permease protein NikC from Staphylococcus aureus (strain bovine RF122 / ET3-1).